A 490-amino-acid polypeptide reads, in one-letter code: Glutamate--tRNA ligase 1 (490 aa).

The short motif at 27–37 (PSPTGYLHIGG) is the 'HIGH' region element. A 'KMSKS' region motif is present at residues 254–258 (KLSKR). Lys-257 is a binding site for ATP.

This sequence belongs to the class-I aminoacyl-tRNA synthetase family. Glutamate--tRNA ligase type 1 subfamily. In terms of assembly, monomer.

It localises to the cytoplasm. It catalyses the reaction tRNA(Glu) + L-glutamate + ATP = L-glutamyl-tRNA(Glu) + AMP + diphosphate. Catalyzes the attachment of glutamate to tRNA(Glu) in a two-step reaction: glutamate is first activated by ATP to form Glu-AMP and then transferred to the acceptor end of tRNA(Glu). The protein is Glutamate--tRNA ligase 1 of Sphingopyxis alaskensis (strain DSM 13593 / LMG 18877 / RB2256) (Sphingomonas alaskensis).